Here is a 296-residue protein sequence, read N- to C-terminus: Chondrolectin (296 aa).

Positions 1–20 are cleaved as a signal peptide; that stretch reads MRATLRILCALTFLVSCSRG. Topologically, residues 21-238 are extracellular; sequence ARVVSGQTVC…RLIIAGPSSM (218 aa). Positions 38 to 187 constitute a C-type lectin domain; sequence CYKIAYFKDV…CNMKHNFICK (150 aa). Basic and acidic residues predominate over residues 197–221; it reads VQSDRPGGHDVDLSTEDKEDRRTPP. A disordered region spans residues 197–229; the sequence is VQSDRPGGHDVDLSTEDKEDRRTPPTDEDESPR. A helical transmembrane segment spans residues 239–266; it reads LLIYVIIPTIPLLLLILVASGTCCFQML. At 267–296 the chain is on the cytoplasmic side; sequence SKSKPRTKTSVNQSTLWISKTPKIDSGMEV.

Expressed in developing motor neurons.

The protein resides in the membrane. Plays a role in the development of the nervous system such as in neurite outgrowth and elongation. Involved in motor axon growth and guidance. Required for correct interactions of motor axons with the horizontal myoseptum. The polypeptide is Chondrolectin (chodl) (Danio rerio (Zebrafish)).